Here is a 231-residue protein sequence, read N- to C-terminus: Flagellar L-ring protein (231 aa).

Residues 1-20 (MTYRRIPLYLSCLFLLALSG) form the signal peptide. Residue Cys-21 is the site of N-palmitoyl cysteine attachment. Cys-21 carries the S-diacylglycerol cysteine lipid modification.

The protein belongs to the FlgH family. As to quaternary structure, the basal body constitutes a major portion of the flagellar organelle and consists of four rings (L,P,S, and M) mounted on a central rod.

It localises to the cell outer membrane. The protein localises to the bacterial flagellum basal body. Functionally, assembles around the rod to form the L-ring and probably protects the motor/basal body from shearing forces during rotation. The polypeptide is Flagellar L-ring protein (Desulfotalea psychrophila (strain LSv54 / DSM 12343)).